Here is a 1048-residue protein sequence, read N- to C-terminus: Calcium-transporting ATPase, endoplasmic reticulum-type (1048 aa).

The Cytoplasmic segment spans residues 1–63; the sequence is MEEKPFPAWS…WRLVLEQFDD (63 aa). The helical transmembrane segment at 64-84 threads the bilayer; sequence TLVKILLGAAFISFVLAYVNQ. Over 85 to 93 the chain is Lumenal; sequence DETGESGFE. The helical transmembrane segment at 94–114 threads the bilayer; that stretch reads AYVEPLVILWILVLNAIVGVW. The Cytoplasmic portion of the chain corresponds to 115–213; it reads QESNAEKALE…DCELQAKENM (99 aa). A helical membrane pass occupies residues 214–234; the sequence is VFAGTTVVNGSCICIVVNTGM. The Lumenal portion of the chain corresponds to 235 to 267; that stretch reads CTEIGKIQRQIHDASMEESDTPLKKKLDEFGNR. A helical transmembrane segment spans residues 268–288; it reads LTFAIGVVCLVVWAINYKYFL. Residues 289-312 are Cytoplasmic-facing; sequence SWEVVDDWPSDFRFSFEKCAYYFK. A helical transmembrane segment spans residues 313–333; sequence IAVALAVAAIPEGLPSVITTC. The Ca(2+) site is built by Val-319, Ala-320, Ile-322, and Glu-324. Topologically, residues 334–800 are lumenal; the sequence is LALGTRKMAQ…ISSNVGEVIS (467 aa). The 4-aspartylphosphate intermediate role is filled by Asp-366. Positions 728 and 732 each coordinate Mg(2+). The Ca(2+) site is built by Asn-794 and Glu-797. A helical membrane pass occupies residues 801–821; that stretch reads IFLTAVLGIPECLIPVQLLWV. Ca(2+) contacts are provided by Asn-822, Thr-825, and Asp-826. Residues 822–862 lie on the Cytoplasmic side of the membrane; the sequence is NLVTDGPPATALGFNPADVDIMQKPPRKNTDALINSWVFFR. Residues 863–883 form a helical membrane-spanning segment; it reads YMVIGSYVGIATVGIFIVWYT. At 884–944 the chain is on the lumenal side; that stretch reads QASFLGINIV…CEYFTVGKVK (61 aa). The chain crosses the membrane as a helical span at residues 945–965; it reads AMTLSLSVLVAIEMFNSLNAL. Ca(2+) is bound at residue Glu-957. Residues 966 to 981 are Cytoplasmic-facing; sequence SEDNSLIKMPPWRNPW. Residues 982 to 1002 traverse the membrane as a helical segment; the sequence is LLVAMSLSFALHSVILYVPFL. Residues 1003 to 1007 lie on the Lumenal side of the membrane; sequence ADIFG. The chain crosses the membrane as a helical span at residues 1008–1028; sequence IVPLSLYEWLLVILLSAPVIL. Topologically, residues 1029–1048 are cytoplasmic; the sequence is IDEVLKFVGRRRRRTKLKAA.

The protein belongs to the cation transport ATPase (P-type) (TC 3.A.3) family. Type IIA subfamily. As to expression, 9-fold higher level in roots compared with leaves.

The protein resides in the endoplasmic reticulum membrane. The catalysed reaction is Ca(2+)(in) + ATP + H2O = Ca(2+)(out) + ADP + phosphate + H(+). Its function is as follows. This magnesium-dependent enzyme catalyzes the hydrolysis of ATP coupled with the translocation of calcium from the cytosol to an endomembrane compartment. The sequence is that of Calcium-transporting ATPase, endoplasmic reticulum-type from Solanum lycopersicum (Tomato).